We begin with the raw amino-acid sequence, 201 residues long: Molybdenum cofactor guanylyltransferase (201 aa).

Residues 15–17 (LAG), K28, D74, and D104 contribute to the GTP site. D104 lines the Mg(2+) pocket.

It belongs to the MobA family. Monomer. The cofactor is Mg(2+).

It is found in the cytoplasm. The catalysed reaction is Mo-molybdopterin + GTP + H(+) = Mo-molybdopterin guanine dinucleotide + diphosphate. Transfers a GMP moiety from GTP to Mo-molybdopterin (Mo-MPT) cofactor (Moco or molybdenum cofactor) to form Mo-molybdopterin guanine dinucleotide (Mo-MGD) cofactor. This chain is Molybdenum cofactor guanylyltransferase, found in Pseudomonas syringae pv. tomato (strain ATCC BAA-871 / DC3000).